A 310-amino-acid chain; its full sequence is UDP-N-acetylenolpyruvoylglucosamine reductase (310 aa).

The FAD-binding PCMH-type domain occupies 31–216 (KIGGPADYFV…LRKIEELNQA (186 aa)). Arg180 is a catalytic residue. Ser230 (proton donor) is an active-site residue. The active site involves Glu300.

It belongs to the MurB family. It depends on FAD as a cofactor.

It is found in the cytoplasm. The catalysed reaction is UDP-N-acetyl-alpha-D-muramate + NADP(+) = UDP-N-acetyl-3-O-(1-carboxyvinyl)-alpha-D-glucosamine + NADPH + H(+). The protein operates within cell wall biogenesis; peptidoglycan biosynthesis. Functionally, cell wall formation. The polypeptide is UDP-N-acetylenolpyruvoylglucosamine reductase (Lachnoclostridium phytofermentans (strain ATCC 700394 / DSM 18823 / ISDg) (Clostridium phytofermentans)).